The primary structure comprises 704 residues: Meprin A subunit beta (704 aa).

The first 20 residues, 1–20, serve as a signal peptide directing secretion; the sequence is MDARHQPWFLVFATFLLVSG. Residues 21-64 constitute a propeptide that is removed on maturation; the sequence is LPAPEKFVKDIDGGIDQDIFDINQGLGLDLFEGDIKLEANGKNS. The Extracellular portion of the chain corresponds to 21–654; that stretch reads LPAPEKFVKD…RCEKRGSTRD (634 aa). A Peptidase M12A domain is found at 63–257; it reads NSIIGDHKRW…LKLNQLYNCT (195 aa). Disulfide bonds link Cys-104-Cys-256, Cys-125-Cys-145, and Cys-266-Cys-428. His-153 provides a ligand contact to Zn(2+). The active site involves Glu-154. Zn(2+) is bound by residues His-157 and His-163. Residues Asn-193, Asn-219, Asn-255, Asn-316, Asn-422, Asn-437, Asn-529, Asn-548, and Asn-593 are each glycosylated (N-linked (GlcNAc...) asparagine). The region spanning 261 to 430 is the MAM domain; the sequence is SFMDSCDFEL…INLSETRCPH (170 aa). The region spanning 431–586 is the MATH domain; the sequence is HIWHIQNFTQ…GDDIYILLTV (156 aa). One can recognise an EGF-like domain in the interval 607–647; that stretch reads VHNACSEVVCQNGGICVVQDGRAECKCPAGEDWWYMGKRCE. 3 disulfide bridges follow: Cys-611/Cys-622, Cys-616/Cys-631, and Cys-633/Cys-646. A helical membrane pass occupies residues 655–678; the sequence is TVIIAVSSTVTVFAVMLIITLVSV. The Cytoplasmic portion of the chain corresponds to 679 to 704; the sequence is YCTRRKYRKKARANTAAMTLENQHAF. Phosphothreonine is present on Thr-697.

In terms of assembly, homotetramer consisting of disulfide-linked beta subunits, or heterotetramer of two alpha and two beta subunits formed by non-covalent association of two disulfide-linked heterodimers. Interacts with MBL2 through its carbohydrate moiety. This interaction may inhibit its catalytic activity. Interacts with TSPAN8. Requires Zn(2+) as cofactor. Post-translationally, proteolytically activated by trypsin in the intestinal lumen and kallikrein-related peptidases in other tissues. In terms of processing, N-glycosylated; contains high mannose and/or complex biantennary structures. Phosphorylated by PKC at multiple sites of its cytoplasmic part. Phosphorylation dcreases activity at the cell surface, leading to diminished substrate cleavage. As to expression, isoform 1 is expressed in kidney, intestinal brush borders, and salivary ducts. Isoform 2 has been found in carcinoma cells.

Its subcellular location is the cell membrane. The protein resides in the secreted. The enzyme catalyses Hydrolysis of proteins, including azocasein, and peptides. Hydrolysis of 5-His-|-Leu-6, 6-Leu-|-Cys-7, 14-Ala-|-Leu-15 and 19-Cys-|-Gly-20 bonds in insulin B chain.. Strongly inhibited by fetuin-A/AHSG. Inhibited by cysteine and by the metal ion chelators EDTA and 1,10-phenanthroline. Not inhibited by 3,4-dichloroisocourmarin, soybean trypsin inhibitor, or the cysteine proteinase inhibitors iodoacetic acid and E-64. Membrane metallopeptidase that sheds many membrane-bound proteins. Exhibits a strong preference for acidic amino acids at the P1' position. Known substrates include: FGF19, VGFA, IL1B, IL18, procollagen I and III, E-cadherin, KLK7, gastrin, ADAM10, tenascin-C. The presence of several pro-inflammatory cytokine among substrates implicate MEP1B in inflammation. It is also involved in tissue remodeling due to its capability to degrade extracellular matrix components. The sequence is that of Meprin A subunit beta (Mep1b) from Mus musculus (Mouse).